Here is a 724-residue protein sequence, read N- to C-terminus: Methionine--tRNA ligase (724 aa).

Positions 12–22 (PYVNNIPHLGN) match the 'HIGH' region motif. Residues C143, C146, C155, and C158 each contribute to the Zn(2+) site. The 'KMSKS' region motif lies at 330–334 (KFSKS). K333 is an ATP binding site. The 106-residue stretch at 560–665 (FREKVLLKVV…KNPIPGERII (106 aa)) folds into the tRNA-binding domain.

It belongs to the class-I aminoacyl-tRNA synthetase family. MetG type 1 subfamily. In terms of assembly, homodimer. It depends on Zn(2+) as a cofactor.

It localises to the cytoplasm. The catalysed reaction is tRNA(Met) + L-methionine + ATP = L-methionyl-tRNA(Met) + AMP + diphosphate. In terms of biological role, is required not only for elongation of protein synthesis but also for the initiation of all mRNA translation through initiator tRNA(fMet) aminoacylation. The protein is Methionine--tRNA ligase of Borrelia garinii subsp. bavariensis (strain ATCC BAA-2496 / DSM 23469 / PBi) (Borreliella bavariensis).